An 808-amino-acid chain; its full sequence is Probable inorganic carbon transporter subunit DabA (808 aa).

Residues cysteine 335, aspartate 337, histidine 497, and cysteine 512 each coordinate Zn(2+).

The protein belongs to the inorganic carbon transporter (TC 9.A.2) DabA family. As to quaternary structure, forms a complex with DabB. Zn(2+) is required as a cofactor.

The protein localises to the cell inner membrane. In terms of biological role, part of an energy-coupled inorganic carbon pump. The polypeptide is Probable inorganic carbon transporter subunit DabA (Rhodopseudomonas palustris (strain ATCC BAA-98 / CGA009)).